A 364-amino-acid polypeptide reads, in one-letter code: Triacylglycerol lipase (364 aa).

Positions 1–44 (MARTMRSRVVAGAVACAMSIAPFAGTTAVMTLATTHAAMAATAP) are cleaved as a signal peptide. An AB hydrolase-1 domain is found at 54-266 (PIILVHGLSG…AIQPTLSVFG (213 aa)). Residue Leu-61 participates in substrate binding. Residue Ser-131 is the Nucleophile of the active site. A substrate-binding site is contributed by Gln-132. Cys-234 and Cys-314 are disulfide-bonded. Asp-286 serves as a coordination point for Ca(2+). Residues Asp-308 and His-330 each act as charge relay system in the active site. Residues Asp-332, Gln-336, and Val-340 each coordinate Ca(2+).

Belongs to the AB hydrolase superfamily. Pseudomonas lipase family. As to quaternary structure, monomer. Ca(2+) is required as a cofactor.

The protein localises to the secreted. It catalyses the reaction a triacylglycerol + H2O = a diacylglycerol + a fatty acid + H(+). Its activity is regulated as follows. Inhibited by RC-(Rp,Sp)- and SC-(Rp,Sp)-1,2-dioctylcarbamoylglycero-3-O-p-nitrophenyl octylphosphonate. Also inhibited by diethyl-p-nitrophenylphosphate (E600). Its function is as follows. Catalyzes the hydrolysis of triacylglycerol. It shows a preference for triacylglycerols with a chain length between 6 and 12 carbons. The polypeptide is Triacylglycerol lipase (Burkholderia cepacia (Pseudomonas cepacia)).